Reading from the N-terminus, the 163-residue chain is Acetolactate synthase isozyme 3 small subunit (163 aa).

The ACT domain occupies 4–78 (ILSVLLENES…DVLRVSELGQ (75 aa)).

This sequence belongs to the acetolactate synthase small subunit family. In terms of assembly, dimer of large and small chains.

The catalysed reaction is 2 pyruvate + H(+) = (2S)-2-acetolactate + CO2. Its pathway is amino-acid biosynthesis; L-isoleucine biosynthesis; L-isoleucine from 2-oxobutanoate: step 1/4. The protein operates within amino-acid biosynthesis; L-valine biosynthesis; L-valine from pyruvate: step 1/4. Sensitive to valine inhibition. The polypeptide is Acetolactate synthase isozyme 3 small subunit (ilvH) (Escherichia coli (strain K12)).